The chain runs to 439 residues: Tol-Pal system protein TolB (439 aa).

The N-terminal stretch at 1 to 22 is a signal peptide; that stretch reads MKKPLRWLAALTALLLPLSALA.

Belongs to the TolB family. In terms of assembly, the Tol-Pal system is composed of five core proteins: the inner membrane proteins TolA, TolQ and TolR, the periplasmic protein TolB and the outer membrane protein Pal. They form a network linking the inner and outer membranes and the peptidoglycan layer.

The protein localises to the periplasm. Its function is as follows. Part of the Tol-Pal system, which plays a role in outer membrane invagination during cell division and is important for maintaining outer membrane integrity. The protein is Tol-Pal system protein TolB of Xanthomonas axonopodis pv. citri (strain 306).